The sequence spans 259 residues: UPF0246 protein NMA1114 (259 aa).

Belongs to the UPF0246 family.

This chain is UPF0246 protein NMA1114, found in Neisseria meningitidis serogroup A / serotype 4A (strain DSM 15465 / Z2491).